A 625-amino-acid polypeptide reads, in one-letter code: 1-deoxy-D-xylulose-5-phosphate synthase (625 aa).

Thiamine diphosphate contacts are provided by residues His80 and 121–123 (GHS). Asp152 contacts Mg(2+). Residues 153 to 154 (GS), Asn181, Tyr290, and Glu371 contribute to the thiamine diphosphate site. Residue Asn181 participates in Mg(2+) binding.

The protein belongs to the transketolase family. DXPS subfamily. As to quaternary structure, homodimer. The cofactor is Mg(2+). Requires thiamine diphosphate as cofactor.

It carries out the reaction D-glyceraldehyde 3-phosphate + pyruvate + H(+) = 1-deoxy-D-xylulose 5-phosphate + CO2. It participates in metabolic intermediate biosynthesis; 1-deoxy-D-xylulose 5-phosphate biosynthesis; 1-deoxy-D-xylulose 5-phosphate from D-glyceraldehyde 3-phosphate and pyruvate: step 1/1. Catalyzes the acyloin condensation reaction between C atoms 2 and 3 of pyruvate and glyceraldehyde 3-phosphate to yield 1-deoxy-D-xylulose-5-phosphate (DXP). The sequence is that of 1-deoxy-D-xylulose-5-phosphate synthase from Haemophilus influenzae (strain PittGG).